The primary structure comprises 142 residues: SLTAKDKALVKAFFGKIAGKADAVGHEALVRMLVVYPQTKTYFAHWPDLSPSSEEVKKHGKTIMAAVKEAVGKIDDLVGGMAQLSDLHAFKMRVDPSNFKILSHNILVTCAVHFPDDFTPEVHVSFDKFLAALSSTAADKYR.

An N-acetylserine modification is found at Ser1. The Globin domain maps to 1–142; it reads SLTAKDKALV…LSSTAADKYR (142 aa). His59 lines the O2 pocket. Position 88 (His88) interacts with heme b.

This sequence belongs to the globin family. As to quaternary structure, heterotetramer of two alpha chains and two beta chains.

In terms of biological role, involved in oxygen transport from gills to the various peripheral tissues. This chain is Hemoglobin cathodic subunit alpha, found in Hoplosternum littorale (Hassar).